The primary structure comprises 161 residues: SUZ RNA-binding domain-containing (161 aa).

Residues 1–17 show a composition bias toward acidic residues; that stretch reads MDDEEVAESWEEAADSG. Residues 1–161 are disordered; sequence MDDEEVAESW…GTQGFHHQRR (161 aa). A compositionally biased stretch (basic and acidic residues) spans 18–35; sequence EMERRLEEKLRISQKERL. Residues 42–111 form the SUZ domain; the sequence is RSPMRTAIVI…ARKRILGSAT (70 aa). The span at 70 to 91 shows a compositional bias: polar residues; sequence PSSNGSLGSSALQTRPSPQVKS. 2 stretches are compositionally biased toward basic and acidic residues: residues 93–104 and 116–126; these read AQREAEYAEARK and PQERPNSDRSP. Positions 116–160 constitute an SUZ-C domain; the sequence is PQERPNSDRSPRGSSHTLSEENRPGNHVVRQPAGPDGTQGFHHQR. Residue Ser-125 is modified to Phosphoserine.

Belongs to the SZRD1 family.

This is SUZ RNA-binding domain-containing (szrd1) from Danio rerio (Zebrafish).